The sequence spans 899 residues: MTDKSIKELALSVGRPVEKLLEQVREAGLPQRTANDIITTEQQDTLVNHLKKIHGQESGAGKITLKRKTTSTAKVASTSGKAKTINVEVRKKHTFTKPNPEQIAAEAKARQETEERTRPQEQPRQAPQQQMRDESENKAQATLNAMRAAQQKETAKTTSTTTEVVVKRKSTNKPIKPVNVKQVETAEQRKAREAEAAKLKAVEETARRKAAEEAQQRTLEQMRKMASKYSTEETGATIRVIDDSPLAAGLVGQAYEDSFNQEDREIKRGGATNPRGQKKGGRNNQEEQSFKSHHKRGLKTSQANKHGFEKPVKKQVYDVEIGSTIVVADLAQKMAIKVREVIKTLMKMGELVTQNQSIDQDTAALVVEEMGHNPILVSDTQAEDNLLEAAEEARGEQTTRPPVVTIMGHVDHGKTSLLDRIRRSKVAAGEAGGITQHIGAYHVETDKGIITFLDTPGHAAFTAMRSRGAKATDIVVLVVAADDGVMPQTAEAIDHARAAGTPIIVAINKMDKESADPDRVLNELTTKQIVPEQWGGDVPVAMVSAHSGQGIDELLDLILIQSELMELKASGEGAAQGVVIEARVDKGRGAVTSILVQNGTLNIGDLVLAGSSYGRVRAMSDENGQPIKSAGPSIPVEILGLPDAPMAGDEVLVVNDEKKAREVADARADRERQKRIERQSAMRLENIMASMGKKDVPTVNVVLKADVRGTLEALTAALNELSMDEVRVRVISSGVGAITESDVTLAESSEAVLLGFNVRADTTARQKSDQDGIDIRYYSIIYELIDDVKNAMSGKLAPEHRETILGVAEVREVFHSSKFGAAAGCMVLEGMLHRNKPIRVLRDDVVVFQGELESLRRYKEVVEEVRAGMECGLAVKGYKDIKAKDKIEVYDVQLIKRSL.

Disordered stretches follow at residues 94–167 and 259–309; these read TFTK…VVVK and FNQE…HGFE. Residues 107 to 121 show a composition bias toward basic and acidic residues; that stretch reads AKARQETEERTRPQE. A compositionally biased stretch (low complexity) spans 147–164; it reads RAAQQKETAKTTSTTTEV. Positions 399–568 constitute a tr-type G domain; it reads TRPPVVTIMG…LIQSELMELK (170 aa). Residues 408 to 415 form a G1 region; that stretch reads GHVDHGKT. 408 to 415 is a GTP binding site; the sequence is GHVDHGKT. The interval 433 to 437 is G2; that stretch reads GITQH. A G3 region spans residues 454–457; sequence DTPG. GTP contacts are provided by residues 454–458 and 508–511; these read DTPGH and NKMD. The tract at residues 508–511 is G4; sequence NKMD. Positions 544-546 are G5; it reads SAH.

This sequence belongs to the TRAFAC class translation factor GTPase superfamily. Classic translation factor GTPase family. IF-2 subfamily.

The protein resides in the cytoplasm. In terms of biological role, one of the essential components for the initiation of protein synthesis. Protects formylmethionyl-tRNA from spontaneous hydrolysis and promotes its binding to the 30S ribosomal subunits. Also involved in the hydrolysis of GTP during the formation of the 70S ribosomal complex. The chain is Translation initiation factor IF-2 from Acinetobacter baylyi (strain ATCC 33305 / BD413 / ADP1).